Consider the following 316-residue polypeptide: Lipooligosaccharide heptosyltransferase 2 (316 aa).

It belongs to the glycosyltransferase 9 family.

It carries out the reaction an L-alpha-D-Hep-(1-&gt;5)-[alpha-Kdo-(2-&gt;4)]-alpha-Kdo-(2-&gt;6)-lipid A + ADP-L-glycero-beta-D-manno-heptose = an L-alpha-D-Hep-(1-&gt;3)-L-alpha-D-Hep-(1-&gt;5)-[alpha-Kdo-(2-&gt;4)]-alpha-Kdo-(2-&gt;6)-lipid A + ADP + H(+). Its pathway is bacterial outer membrane biogenesis; LOS core biosynthesis. In terms of biological role, glycosyltransferase involved in the biosynthesis of the core oligosaccharide region of lipooligosaccharide (LOS). Catalyzes the addition of the second heptose unit to the heptosyl-Kdo2-lipid A module. The chain is Lipooligosaccharide heptosyltransferase 2 from Campylobacter jejuni subsp. jejuni serotype O:6 (strain 81116 / NCTC 11828).